The following is a 324-amino-acid chain: NADH-quinone oxidoreductase subunit H 2 (324 aa).

9 helical membrane passes run Met-1–Val-21, Ile-77–Gly-97, Val-109–Ala-129, Leu-147–Leu-167, Val-179–Ala-199, Leu-214–Glu-234, Val-238–Trp-258, Leu-263–Ile-283, and Phe-298–Val-318.

The protein belongs to the complex I subunit 1 family. As to quaternary structure, NDH-1 is composed of 14 different subunits. Subunits NuoA, H, J, K, L, M, N constitute the membrane sector of the complex.

It localises to the cell inner membrane. The catalysed reaction is a quinone + NADH + 5 H(+)(in) = a quinol + NAD(+) + 4 H(+)(out). Its function is as follows. NDH-1 shuttles electrons from NADH, via FMN and iron-sulfur (Fe-S) centers, to quinones in the respiratory chain. The immediate electron acceptor for the enzyme in this species is believed to be ubiquinone. Couples the redox reaction to proton translocation (for every two electrons transferred, four hydrogen ions are translocated across the cytoplasmic membrane), and thus conserves the redox energy in a proton gradient. This subunit may bind ubiquinone. This chain is NADH-quinone oxidoreductase subunit H 2, found in Rhodopseudomonas palustris (strain BisB18).